Consider the following 312-residue polypeptide: MSANTSMVTEFLLLGFSHLADLQGLLFSVFLTIYLLTVAGNFLIVVLVSTDAALQSPMYFFLRTLSALEIGYTSVTVPLLLHHLLTGRRHISRSGCALQMFFFLFFGATECCLLAAMAYDRYAAICEPLRYPLLLSHRVCLQLAGSAWACGVLVGLGHTPFIFSLPFCGPNTIPQFFCEIQPVLQLVCGDTSLNELQIILATALLILCPFGLILGSYGRILVTIFRIPSVAGRRKAFSTCSSHLIMVSLFYGTALFIYIRPKASYDPATDPLVSLFYAVVTPILNPIIYSLRNTEVKAALKRTIQKTVPMEI.

The Extracellular portion of the chain corresponds to 1 to 24 (MSANTSMVTEFLLLGFSHLADLQG). Residue asparagine 4 is glycosylated (N-linked (GlcNAc...) asparagine). The helical transmembrane segment at 25–45 (LLFSVFLTIYLLTVAGNFLIV) threads the bilayer. Topologically, residues 46–53 (VLVSTDAA) are cytoplasmic. Residues 54-74 (LQSPMYFFLRTLSALEIGYTS) form a helical membrane-spanning segment. The Extracellular portion of the chain corresponds to 75–98 (VTVPLLLHHLLTGRRHISRSGCAL). Cysteine 96 and cysteine 188 form a disulfide bridge. Residues 99–119 (QMFFFLFFGATECCLLAAMAY) traverse the membrane as a helical segment. Over 120–138 (DRYAAICEPLRYPLLLSHR) the chain is Cytoplasmic. The helical transmembrane segment at 139–159 (VCLQLAGSAWACGVLVGLGHT) threads the bilayer. The Extracellular segment spans residues 160–196 (PFIFSLPFCGPNTIPQFFCEIQPVLQLVCGDTSLNEL). A helical membrane pass occupies residues 197–216 (QIILATALLILCPFGLILGS). Residues 217 to 236 (YGRILVTIFRIPSVAGRRKA) lie on the Cytoplasmic side of the membrane. Residues 237–257 (FSTCSSHLIMVSLFYGTALFI) form a helical membrane-spanning segment. The Extracellular portion of the chain corresponds to 258 to 270 (YIRPKASYDPATD). The helical transmembrane segment at 271-291 (PLVSLFYAVVTPILNPIIYSL) threads the bilayer. At 292 to 312 (RNTEVKAALKRTIQKTVPMEI) the chain is on the cytoplasmic side.

Belongs to the G-protein coupled receptor 1 family.

It localises to the cell membrane. In terms of biological role, odorant receptor. In Homo sapiens (Human), this protein is Olfactory receptor 10C1 (OR10C1).